Here is a 434-residue protein sequence, read N- to C-terminus: Chaperone SurA (434 aa).

The first 20 residues, 1–20 (MKNWRTLILGLVICANTAFA), serve as a signal peptide directing secretion. PpiC domains follow at residues 171-272 (DTEL…KVND) and 282-382 (VTEV…QLVD).

The protein localises to the periplasm. It carries out the reaction [protein]-peptidylproline (omega=180) = [protein]-peptidylproline (omega=0). Functionally, chaperone involved in the correct folding and assembly of outer membrane proteins. Recognizes specific patterns of aromatic residues and the orientation of their side chains, which are found more frequently in integral outer membrane proteins. May act in both early periplasmic and late outer membrane-associated steps of protein maturation. This is Chaperone SurA from Yersinia pestis bv. Antiqua (strain Nepal516).